The chain runs to 874 residues: Alanine--tRNA ligase (874 aa).

His562, His566, Cys665, and His669 together coordinate Zn(2+).

This sequence belongs to the class-II aminoacyl-tRNA synthetase family. Requires Zn(2+) as cofactor.

It is found in the cytoplasm. It catalyses the reaction tRNA(Ala) + L-alanine + ATP = L-alanyl-tRNA(Ala) + AMP + diphosphate. Catalyzes the attachment of alanine to tRNA(Ala) in a two-step reaction: alanine is first activated by ATP to form Ala-AMP and then transferred to the acceptor end of tRNA(Ala). Also edits incorrectly charged Ser-tRNA(Ala) and Gly-tRNA(Ala) via its editing domain. The sequence is that of Alanine--tRNA ligase from Pseudomonas aeruginosa (strain ATCC 15692 / DSM 22644 / CIP 104116 / JCM 14847 / LMG 12228 / 1C / PRS 101 / PAO1).